Consider the following 617-residue polypeptide: Dihydroxy-acid dehydratase (617 aa).

Asp-81 is a binding site for Mg(2+). Cys-122 provides a ligand contact to [2Fe-2S] cluster. Residues Asp-123 and Lys-124 each coordinate Mg(2+). Lys-124 is modified (N6-carboxylysine). Cys-195 serves as a coordination point for [2Fe-2S] cluster. Glu-490 serves as a coordination point for Mg(2+). Residue Ser-516 is the Proton acceptor of the active site.

The protein belongs to the IlvD/Edd family. Homodimer. The cofactor is [2Fe-2S] cluster. Mg(2+) serves as cofactor.

The enzyme catalyses (2R)-2,3-dihydroxy-3-methylbutanoate = 3-methyl-2-oxobutanoate + H2O. It carries out the reaction (2R,3R)-2,3-dihydroxy-3-methylpentanoate = (S)-3-methyl-2-oxopentanoate + H2O. It participates in amino-acid biosynthesis; L-isoleucine biosynthesis; L-isoleucine from 2-oxobutanoate: step 3/4. The protein operates within amino-acid biosynthesis; L-valine biosynthesis; L-valine from pyruvate: step 3/4. Functionally, functions in the biosynthesis of branched-chain amino acids. Catalyzes the dehydration of (2R,3R)-2,3-dihydroxy-3-methylpentanoate (2,3-dihydroxy-3-methylvalerate) into 2-oxo-3-methylpentanoate (2-oxo-3-methylvalerate) and of (2R)-2,3-dihydroxy-3-methylbutanoate (2,3-dihydroxyisovalerate) into 2-oxo-3-methylbutanoate (2-oxoisovalerate), the penultimate precursor to L-isoleucine and L-valine, respectively. The polypeptide is Dihydroxy-acid dehydratase (Acidiphilium cryptum (strain JF-5)).